The following is a 159-amino-acid chain: Transcription elongation factor GreA (159 aa).

The stretch at 7 to 72 forms a coiled coil; that stretch reads MTVRGAEKLR…IQEIESKLSN (66 aa).

The protein belongs to the GreA/GreB family.

Necessary for efficient RNA polymerase transcription elongation past template-encoded arresting sites. The arresting sites in DNA have the property of trapping a certain fraction of elongating RNA polymerases that pass through, resulting in locked ternary complexes. Cleavage of the nascent transcript by cleavage factors such as GreA or GreB allows the resumption of elongation from the new 3'terminus. GreA releases sequences of 2 to 3 nucleotides. In Buchnera aphidicola subsp. Schizaphis graminum (strain Sg), this protein is Transcription elongation factor GreA.